Here is a 614-residue protein sequence, read N- to C-terminus: 1-deoxy-D-xylulose-5-phosphate synthase (614 aa).

Residues His74 and 115–117 (AHS) contribute to the thiamine diphosphate site. Asp146 lines the Mg(2+) pocket. Thiamine diphosphate contacts are provided by residues 147-148 (GA), Asn175, Tyr282, and Glu363. Asn175 lines the Mg(2+) pocket.

It belongs to the transketolase family. DXPS subfamily. As to quaternary structure, homodimer. Mg(2+) serves as cofactor. Requires thiamine diphosphate as cofactor.

The catalysed reaction is D-glyceraldehyde 3-phosphate + pyruvate + H(+) = 1-deoxy-D-xylulose 5-phosphate + CO2. The protein operates within metabolic intermediate biosynthesis; 1-deoxy-D-xylulose 5-phosphate biosynthesis; 1-deoxy-D-xylulose 5-phosphate from D-glyceraldehyde 3-phosphate and pyruvate: step 1/1. Its function is as follows. Catalyzes the acyloin condensation reaction between C atoms 2 and 3 of pyruvate and glyceraldehyde 3-phosphate to yield 1-deoxy-D-xylulose-5-phosphate (DXP). This chain is 1-deoxy-D-xylulose-5-phosphate synthase, found in Nitrosomonas europaea (strain ATCC 19718 / CIP 103999 / KCTC 2705 / NBRC 14298).